A 71-amino-acid chain; its full sequence is MKLSKKKMQRIDNTLEKLFEWSHLNGYDNWLTNQLALEKEIEQGYRCETCKLVIKSVNKDEIVCKCINEKR.

This is an uncharacterized protein from Spiroplasma virus 4 (SpV4).